Here is a 375-residue protein sequence, read N- to C-terminus: 4-hydroxy-3-methylbut-2-en-1-yl diphosphate synthase (flavodoxin) (375 aa).

The [4Fe-4S] cluster site is built by cysteine 275, cysteine 278, cysteine 310, and glutamate 317.

The protein belongs to the IspG family. [4Fe-4S] cluster is required as a cofactor.

The enzyme catalyses (2E)-4-hydroxy-3-methylbut-2-enyl diphosphate + oxidized [flavodoxin] + H2O + 2 H(+) = 2-C-methyl-D-erythritol 2,4-cyclic diphosphate + reduced [flavodoxin]. It functions in the pathway isoprenoid biosynthesis; isopentenyl diphosphate biosynthesis via DXP pathway; isopentenyl diphosphate from 1-deoxy-D-xylulose 5-phosphate: step 5/6. Functionally, converts 2C-methyl-D-erythritol 2,4-cyclodiphosphate (ME-2,4cPP) into 1-hydroxy-2-methyl-2-(E)-butenyl 4-diphosphate. The protein is 4-hydroxy-3-methylbut-2-en-1-yl diphosphate synthase (flavodoxin) of Ruegeria pomeroyi (strain ATCC 700808 / DSM 15171 / DSS-3) (Silicibacter pomeroyi).